Consider the following 551-residue polypeptide: Dol-P-Man:Man(7)GlcNAc(2)-PP-Dol alpha-1,6-mannosyltransferase (551 aa).

The Lumenal portion of the chain corresponds to 1 to 2; it reads MR. A helical membrane pass occupies residues 3-23; it reads WSVLDTVLLTVISFHLIQAPF. The Cytoplasmic segment spans residues 24–61; the sequence is TKVEESFNIQAIHDILTYSVFDISQYDHLKFPGVVPRT. Residues 62 to 82 form a helical membrane-spanning segment; it reads FVGAVIIAMLSRPYLYLSSLI. Over 83–89 the chain is Lumenal; it reads QTSRPTS. Residues 90–110 traverse the membrane as a helical segment; the sequence is IDVQLVVRGIVGLTNGLSFIY. The Cytoplasmic segment spans residues 111–136; that stretch reads LKNCLQDMFDEITEKKKEENEDKDIY. A helical transmembrane segment spans residues 137–157; the sequence is IYDSAGTWFLLFLIGSFHLMF. At 158-178 the chain is on the lumenal side; that stretch reads YSTRTLPNFVMTLPLTNVALG. The helical transmembrane segment at 179–199 threads the bilayer; sequence WVLLGRYNAAIFLSALVAIVF. Over 200–202 the chain is Cytoplasmic; the sequence is RLE. The chain crosses the membrane as a helical span at residues 203 to 223; it reads VSALSAGIALFSVIFKKISLF. Residues 224–227 lie on the Lumenal side of the membrane; that stretch reads DAIK. Residues 228 to 248 form a helical membrane-spanning segment; that stretch reads FGIFGLGLGSAISITVDSYFW. At 249–275 the chain is on the cytoplasmic side; sequence QEWCLPEVDGFLFNVVAGYASKWGVEP. A helical membrane pass occupies residues 276-296; that stretch reads VTAYFTHYLRMMFMPPTVLLL. Residues 297-303 lie on the Lumenal side of the membrane; sequence NYFGYKL. Residues 304–324 form a helical membrane-spanning segment; sequence APAKLKIVSLASLFHIIVLSF. The Cytoplasmic portion of the chain corresponds to 325 to 331; it reads QPHKEWR. The chain crosses the membrane as a helical span at residues 332-352; it reads FIIYAVPSIMLLGATGAAHLW. Residues 353-365 lie on the Lumenal side of the membrane; sequence ENMKVKKITNVLC. The chain crosses the membrane as a helical span at residues 366-386; it reads LAILPLSIMTSFFISMAFLYI. Over 387–417 the chain is Cytoplasmic; sequence SRMNYPGGEALTSFNDMIVEKNITNATVHIS. The chain crosses the membrane as a helical span at residues 418–438; the sequence is IPPCMTGVTLFGELNYGVYGI. The Lumenal portion of the chain corresponds to 439-551; it reads NYDKTENTTL…KRIKQDEKTD (113 aa).

It belongs to the glycosyltransferase 22 family.

The protein resides in the endoplasmic reticulum membrane. The catalysed reaction is an alpha-D-Man-(1-&gt;2)-alpha-D-Man-(1-&gt;2)-alpha-D-Man-(1-&gt;3)-[alpha-D-Man-(1-&gt;2)-alpha-D-Man-(1-&gt;3)-alpha-D-Man-(1-&gt;6)]-beta-D-Man-(1-&gt;4)-beta-D-GlcNAc-(1-&gt;4)-alpha-D-GlcNAc-diphospho-di-trans,poly-cis-dolichol + a di-trans,poly-cis-dolichyl beta-D-mannosyl phosphate = an alpha-D-Man-(1-&gt;2)-alpha-D-Man-(1-&gt;2)-alpha-D-Man-(1-&gt;3)-[alpha-D-Man-(1-&gt;2)-alpha-D-Man-(1-&gt;3)-[alpha-D-Man-(1-&gt;6)]-alpha-D-Man-(1-&gt;6)]-beta-D-Man-(1-&gt;4)-beta-D-GlcNAc-(1-&gt;4)-alpha-D-GlcNAc-diphospho-di-trans,poly-cis-dolichol + a di-trans,poly-cis-dolichyl phosphate + H(+). It participates in protein modification; protein glycosylation. Its function is as follows. Mannosyltransferase that operates in the biosynthetic pathway of dolichol-linked oligosaccharides, the glycan precursors employed in protein asparagine (N)-glycosylation. The assembly of dolichol-linked oligosaccharides begins on the cytosolic side of the endoplasmic reticulum membrane and finishes in its lumen. The sequential addition of sugars to dolichol pyrophosphate produces dolichol-linked oligosaccharides containing fourteen sugars, including two GlcNAcs, nine mannoses and three glucoses. Once assembled, the oligosaccharide is transferred from the lipid to nascent proteins by oligosaccharyltransferases. In the lumen of the endoplasmic reticulum, adds the eighth mannose residue in an alpha-1,6 linkage onto Man(7)GlcNAc(2)-PP-dolichol to produce Man(8)GlcNAc(2)-PP-dolichol. In Saccharomyces cerevisiae (strain ATCC 204508 / S288c) (Baker's yeast), this protein is Dol-P-Man:Man(7)GlcNAc(2)-PP-Dol alpha-1,6-mannosyltransferase (ALG12).